The chain runs to 516 residues: Endoglucanase 20 (516 aa).

The N-terminal stretch at 1–23 (MAAGMVATMVLLTCLAAGGLVVG) is a signal peptide. Residue N83 is glycosylated (N-linked (GlcNAc...) asparagine). The active-site Nucleophile is the D93. Active-site residues include H416, D468, and E477.

Belongs to the glycosyl hydrolase 9 (cellulase E) family.

The protein localises to the secreted. It catalyses the reaction Endohydrolysis of (1-&gt;4)-beta-D-glucosidic linkages in cellulose, lichenin and cereal beta-D-glucans.. This Oryza sativa subsp. japonica (Rice) protein is Endoglucanase 20 (GLU15).